We begin with the raw amino-acid sequence, 70 residues long: Beta sliding clamp (70 aa).

The protein belongs to the beta sliding clamp family. In terms of assembly, forms a ring-shaped head-to-tail homodimer around DNA which binds and tethers DNA polymerases and other proteins to the DNA. The DNA replisome complex has a single clamp-loading complex (3 tau and 1 each of delta, delta', psi and chi subunits) which binds 3 Pol III cores (1 core on the leading strand and 2 on the lagging strand) each with a beta sliding clamp dimer. Additional proteins in the replisome are other copies of gamma, psi and chi, Ssb, DNA helicase and RNA primase.

The protein localises to the cytoplasm. Functionally, confers DNA tethering and processivity to DNA polymerases and other proteins. Acts as a clamp, forming a ring around DNA (a reaction catalyzed by the clamp-loading complex) which diffuses in an ATP-independent manner freely and bidirectionally along dsDNA. Initially characterized for its ability to contact the catalytic subunit of DNA polymerase III (Pol III), a complex, multichain enzyme responsible for most of the replicative synthesis in bacteria; Pol III exhibits 3'-5' exonuclease proofreading activity. The beta chain is required for initiation of replication as well as for processivity of DNA replication. The protein is Beta sliding clamp (dnaN) of Rhodobacter capsulatus (Rhodopseudomonas capsulata).